A 184-amino-acid chain; its full sequence is ATP synthase subunit b, chloroplastic (184 aa).

Residues 31–53 form a helical membrane-spanning segment; the sequence is LINLAVVIGVLVYFGKGVLTTIL.

Belongs to the ATPase B chain family. As to quaternary structure, F-type ATPases have 2 components, F(1) - the catalytic core - and F(0) - the membrane proton channel. F(1) has five subunits: alpha(3), beta(3), gamma(1), delta(1), epsilon(1). F(0) has four main subunits: a(1), b(1), b'(1) and c(10-14). The alpha and beta chains form an alternating ring which encloses part of the gamma chain. F(1) is attached to F(0) by a central stalk formed by the gamma and epsilon chains, while a peripheral stalk is formed by the delta, b and b' chains.

Its subcellular location is the plastid. It is found in the chloroplast thylakoid membrane. Functionally, f(1)F(0) ATP synthase produces ATP from ADP in the presence of a proton or sodium gradient. F-type ATPases consist of two structural domains, F(1) containing the extramembraneous catalytic core and F(0) containing the membrane proton channel, linked together by a central stalk and a peripheral stalk. During catalysis, ATP synthesis in the catalytic domain of F(1) is coupled via a rotary mechanism of the central stalk subunits to proton translocation. Component of the F(0) channel, it forms part of the peripheral stalk, linking F(1) to F(0). This is ATP synthase subunit b, chloroplastic from Staurastrum punctulatum (Green alga).